Consider the following 601-residue polypeptide: COP9 signalosome complex subunit 1 (601 aa).

Residues 1–10 (MQNELLDDPM) show a composition bias toward acidic residues. 2 disordered regions span residues 1–54 (MQNE…LDNP) and 268–294 (DADD…PYMV). A compositionally biased stretch (low complexity) spans 14–24 (APAAEAAAADE). Residues 338–500 (TILQIKTECL…GIVRILDERD (163 aa)) enclose the PCI domain. Residues 535 to 581 (SISDKETRPKRKNQKESAKFDRNFGGIDVDEDPRGIAGPSGLSDDFN) form a disordered region.

The protein belongs to the CSN1 family. In terms of assembly, component of the CSN complex, probably composed of csn-1, csn-2, csn-3, csn-4, csn-5, csn-6 and csn-7. Within the complex it probably interacts directly with csn-2, csn-4 and csn-5. May interact with itself. Interacts with rbx-1.

The protein localises to the cytoplasm. Its subcellular location is the nucleus. Its function is as follows. Essential component of the COP9 signalosome complex (CSN), a complex involved in various cellular and developmental processes. The CSN complex is an essential regulator of the ubiquitin (Ubl) conjugation pathway by mediating the deneddylation of the cullin subunits of the SCF-type E3 ligase complexes, leading to decrease the Ubl ligase activity of SCF. The CSN complex plays an essential role in embryogenesis and oogenesis and is required to regulate microtubule stability in the early embryo. Mediates mei-3/katanin targeting for degradation at the meiosis to mitosis transition via deneddylation of cul-3. The chain is COP9 signalosome complex subunit 1 (csn-1) from Caenorhabditis elegans.